The primary structure comprises 258 residues: Phosphate import ATP-binding protein PstB 1 (258 aa).

The ABC transporter domain maps to Leu-5–Lys-247. Residue Gly-37 to Thr-44 participates in ATP binding.

Belongs to the ABC transporter superfamily. Phosphate importer (TC 3.A.1.7) family. As to quaternary structure, the complex is composed of two ATP-binding proteins (PstB), two transmembrane proteins (PstC and PstA) and a solute-binding protein (PstS).

The protein localises to the cell membrane. The enzyme catalyses phosphate(out) + ATP + H2O = ADP + 2 phosphate(in) + H(+). Its function is as follows. Part of the ABC transporter complex PstSACB involved in phosphate import. Responsible for energy coupling to the transport system. The chain is Phosphate import ATP-binding protein PstB 1 from Mycobacterium tuberculosis (strain CDC 1551 / Oshkosh).